Reading from the N-terminus, the 274-residue chain is Putative pyruvate, phosphate dikinase regulatory protein (274 aa).

153-160 contributes to the ADP binding site; that stretch reads GISRTSKT.

It belongs to the pyruvate, phosphate/water dikinase regulatory protein family. PDRP subfamily.

The enzyme catalyses N(tele)-phospho-L-histidyl/L-threonyl-[pyruvate, phosphate dikinase] + ADP = N(tele)-phospho-L-histidyl/O-phospho-L-threonyl-[pyruvate, phosphate dikinase] + AMP + H(+). It catalyses the reaction N(tele)-phospho-L-histidyl/O-phospho-L-threonyl-[pyruvate, phosphate dikinase] + phosphate + H(+) = N(tele)-phospho-L-histidyl/L-threonyl-[pyruvate, phosphate dikinase] + diphosphate. Its function is as follows. Bifunctional serine/threonine kinase and phosphorylase involved in the regulation of the pyruvate, phosphate dikinase (PPDK) by catalyzing its phosphorylation/dephosphorylation. The polypeptide is Putative pyruvate, phosphate dikinase regulatory protein (Bartonella henselae (strain ATCC 49882 / DSM 28221 / CCUG 30454 / Houston 1) (Rochalimaea henselae)).